Consider the following 291-residue polypeptide: MDDGIVSYGEHPLNRLKFFQFDKSNDVTLLLIHGGAWRDPNNTYNDFKDMISHIQKNQYAAKYNLIAMNYRLSPEVKHPFHLWDVLEGLQFLVQNYDIHKISIAGHSVGATLMLQLLDYNKILDTGFQILVEDSKADKNRTETDLHVPSKKERILMNEAMEKLQLRTFCFIDGIYDITQLISEYGCPYESFVNNAFSSPEQYAEATQLSSSTVDVGSPFSYNTHSANVRNELNLVILQSNKDELLSMRQTNLFIEYLTQKNLNFKPFVGEWGGHEHVYRHEDVANIVLDSI.

Residues 33-37 (HGGAW) carry the HGGXW motif. The active-site Nucleophile is Ser-107. Active-site residues include Asp-242 and His-280.

It belongs to the kynurenine formamidase family. Homodimer.

The catalysed reaction is N-formyl-L-kynurenine + H2O = L-kynurenine + formate + H(+). It functions in the pathway amino-acid degradation; L-tryptophan degradation via kynurenine pathway; L-kynurenine from L-tryptophan: step 2/2. In terms of biological role, catalyzes the hydrolysis of N-formyl-L-kynurenine to L-kynurenine, the second step in the kynurenine pathway of tryptophan degradation. Kynurenine may be further oxidized to nicotinic acid, NAD(H) and NADP(H). Required for elimination of toxic metabolites. The chain is Kynurenine formamidase from Debaryomyces hansenii (strain ATCC 36239 / CBS 767 / BCRC 21394 / JCM 1990 / NBRC 0083 / IGC 2968) (Yeast).